The chain runs to 215 residues: HTH-type transcriptional repressor FabR (215 aa).

Residues 10–70 (KTRRSLVEAA…TMVDESGLML (61 aa)) form the HTH tetR-type domain. The segment at residues 33–52 (SLREVAREAGIAPTSFYRHF) is a DNA-binding region (H-T-H motif).

Homodimer.

Its subcellular location is the cytoplasm. Its function is as follows. Represses the transcription of fabB, involved in unsaturated fatty acid (UFA) biosynthesis. By controlling UFA production, FabR directly influences the physical properties of the membrane bilayer. The sequence is that of HTH-type transcriptional repressor FabR from Escherichia coli O9:H4 (strain HS).